We begin with the raw amino-acid sequence, 187 residues long: Tetraheme c-type cytochrome CymA (187 aa).

The Cytoplasmic portion of the chain corresponds to 1–12; the sequence is MNWRALFKPSAK. The helical transmembrane segment at 13 to 33 threads the bilayer; the sequence is YSILALLVVGIVIGVVGYFAT. Over 34–187 the chain is Periplasmic; sequence QQTLHATSTD…KGVAHPYPKG (154 aa). Residues Cys46, Cys49, His64, Cys75, Cys78, His79, Asp97, Cys136, Cys139, His140, Cys173, Cys176, His177, and His182 each contribute to the heme c site.

This sequence belongs to the NapC/NirT/NrfH family. In terms of assembly, homodimer. Requires heme c as cofactor.

It localises to the cell inner membrane. The enzyme catalyses a quinol + 2 Fe(III)-[cytochrome c](out) = a quinone + 2 Fe(II)-[cytochrome c](out) + 2 H(+)(out). Its activity is regulated as follows. Spectroscopic studies suggest that CymA requires a non-heme cofactor for quinol oxidation. In terms of biological role, quinol dehydrogenase involved in several anaerobic electron transfer pathways. Acquires electrons from the membrane quinone pool and mediates their transfer to several periplasmic terminal reductases and redox shuttles, including the fumarate reductase FccA, the small tetraheme cytochrome (STC), the c-type cytochrome MtrA, the nitrate reductase NapA (either through NapB or directly), the nitrite reductase NrfA and probably also the DmsE subunit of dimethyl sulfoxide (DMSO) reductase. Required for growth on fumarate and on DMSO, and for the reduction of iron(III), manganese(IV), nitrite and nitrate. Not essential for growth on trimethylamine-N-oxide (TMAO). The protein is Tetraheme c-type cytochrome CymA of Shewanella oneidensis (strain ATCC 700550 / JCM 31522 / CIP 106686 / LMG 19005 / NCIMB 14063 / MR-1).